Consider the following 115-residue polypeptide: NADH-ubiquinone oxidoreductase chain 3 (115 aa).

Helical transmembrane passes span 3–23 (FALI…ITFW), 55–75 (FFLV…LLPL), and 84–104 (LPLM…SLAY).

Belongs to the complex I subunit 3 family. As to quaternary structure, core subunit of respiratory chain NADH dehydrogenase (Complex I) which is composed of 45 different subunits. Interacts with TMEM186. Interacts with TMEM242.

The protein localises to the mitochondrion inner membrane. The catalysed reaction is a ubiquinone + NADH + 5 H(+)(in) = a ubiquinol + NAD(+) + 4 H(+)(out). Core subunit of the mitochondrial membrane respiratory chain NADH dehydrogenase (Complex I) which catalyzes electron transfer from NADH through the respiratory chain, using ubiquinone as an electron acceptor. Essential for the catalytic activity of complex I. This is NADH-ubiquinone oxidoreductase chain 3 from Homo sapiens (Human).